The chain runs to 210 residues: Phosphate propanoyltransferase (210 aa).

CoA is bound at residue Val26–Asn28. Zn(2+) is bound by residues His30 and His32. CoA is bound by residues Lys71 and Arg78. Residue Arg84 coordinates phosphate. Positions 90, 138, 140, and 186 each coordinate Zn(2+). Asn193 contacts CoA.

It belongs to the PduL family. Monomer, when purified in the absence of the encapsulation peptide (EP, residues 1-27). The EP may influence oligomerization. Requires Zn(2+) as cofactor.

It is found in the bacterial microcompartment. It catalyses the reaction propanoyl-CoA + phosphate = propanoyl phosphate + CoA. It participates in polyol metabolism; 1,2-propanediol degradation. Involved in 1,2-propanediol (1,2-PD) utilization in the bacterial microcompartment (BMC) dedicated to 1,2-PD degradation by catalyzing the conversion of propanoyl-CoA to propanoyl-phosphate. Also able to catalyze the reverse reaction. Also has phosphate acetyltransferase activity to a lesser extent. Required for optimal growth on 1,2-PD when the BMC is intact. CoA is regenerated within the BMC (for use by PduP) via this enzyme, although there must also be cofactor transport across the BMC. Directly targeted to the BMC. Functionally, the 1,2-PD-specific bacterial microcompartment (BMC) concentrates low levels of 1,2-PD catabolic enzymes, concentrates volatile reaction intermediates thus enhancing pathway flux and keeps the level of toxic, mutagenic propionaldehyde low. This is Phosphate propanoyltransferase from Salmonella typhimurium (strain LT2 / SGSC1412 / ATCC 700720).